The following is a 378-amino-acid chain: Putative glutamate--cysteine ligase 2 (378 aa).

The protein belongs to the glutamate--cysteine ligase type 2 family. YbdK subfamily.

The catalysed reaction is L-cysteine + L-glutamate + ATP = gamma-L-glutamyl-L-cysteine + ADP + phosphate + H(+). ATP-dependent carboxylate-amine ligase which exhibits weak glutamate--cysteine ligase activity. This is Putative glutamate--cysteine ligase 2 from Bdellovibrio bacteriovorus (strain ATCC 15356 / DSM 50701 / NCIMB 9529 / HD100).